We begin with the raw amino-acid sequence, 432 residues long: Glutamate-1-semialdehyde 2,1-aminomutase 1 (432 aa).

At Lys272 the chain carries N6-(pyridoxal phosphate)lysine.

This sequence belongs to the class-III pyridoxal-phosphate-dependent aminotransferase family. HemL subfamily. Homodimer. Pyridoxal 5'-phosphate is required as a cofactor.

The protein localises to the cytoplasm. The catalysed reaction is (S)-4-amino-5-oxopentanoate = 5-aminolevulinate. It functions in the pathway porphyrin-containing compound metabolism; protoporphyrin-IX biosynthesis; 5-aminolevulinate from L-glutamyl-tRNA(Glu): step 2/2. The polypeptide is Glutamate-1-semialdehyde 2,1-aminomutase 1 (Exiguobacterium sp. (strain ATCC BAA-1283 / AT1b)).